A 198-amino-acid polypeptide reads, in one-letter code: Riboflavin synthase (198 aa).

2 Lumazine-binding repeats span residues 1–95 (MFSG…IGGH) and 96–188 (FVSG…VDTV). 2,4-dihydroxypteridine is bound by residues 4-6 (GII), 46-48 (CLT), 60-65 (DVTEET), 99-101 (GHV), lysine 130, 139-141 (SLT), and 153-158 (SVIPET).

Homotrimer.

The catalysed reaction is 2 6,7-dimethyl-8-(1-D-ribityl)lumazine + H(+) = 5-amino-6-(D-ribitylamino)uracil + riboflavin. Its pathway is cofactor biosynthesis; riboflavin biosynthesis; riboflavin from 2-hydroxy-3-oxobutyl phosphate and 5-amino-6-(D-ribitylamino)uracil: step 2/2. Its function is as follows. Catalyzes the dismutation of two molecules of 6,7-dimethyl-8-ribityllumazine, resulting in the formation of riboflavin and 5-amino-6-(D-ribitylamino)uracil. The chain is Riboflavin synthase (ribE) from Chlamydia muridarum (strain MoPn / Nigg).